The following is a 346-amino-acid chain: MDGNMKALIKKPGEPGASFELVPIPKIDKHEVLIKVKAASICGTDVHIYNWDEWAKSRVKPPYVFGHEFSGEVVQVGENVTTVKEGEYVSAETHIVCGKCLPCLTGKEHVCKKTLILGVDTDGCFAEYVKMPAANIWKNPAGMPEDLASIQEPLGNAVHTVLTGMTAGVKVAVVGCGPIGLMAVAVAKASGAAQVIAIDKNEYRLDLALQMGATDIISVEKEDPLKNVSALTNGEGADLVCEMSGHPTAIRQSLKMAANGGRVHVLSLPEHPVCIDMTNDIVFKGLTVQGITGRKMFETWRQVSGLLQSGTIQIKPVITHRFPMEEFEKGFELMRKGQCGKVVLIP.

Cysteine 42 is a Zn(2+) binding site. Residues threonine 44 and histidine 47 each act as charge relay system in the active site. Zn(2+) contacts are provided by histidine 67, glutamate 68, cysteine 97, cysteine 100, cysteine 103, and cysteine 111. NAD(+) is bound by residues isoleucine 179, aspartate 199, arginine 204, 266 to 268, and 291 to 292; these read LSL and IT.

It belongs to the zinc-containing alcohol dehydrogenase family. Homotetramer. The cofactor is Zn(2+).

The protein localises to the cytoplasm. It catalyses the reaction L-threonine + NAD(+) = (2S)-2-amino-3-oxobutanoate + NADH + H(+). The protein operates within amino-acid degradation; L-threonine degradation via oxydo-reductase pathway; glycine from L-threonine: step 1/2. Catalyzes the NAD(+)-dependent oxidation of L-threonine to 2-amino-3-ketobutyrate. In Bacillus licheniformis (strain ATCC 14580 / DSM 13 / JCM 2505 / CCUG 7422 / NBRC 12200 / NCIMB 9375 / NCTC 10341 / NRRL NRS-1264 / Gibson 46), this protein is L-threonine 3-dehydrogenase.